Reading from the N-terminus, the 983-residue chain is Bifunctional glutamine synthetase adenylyltransferase/adenylyl-removing enzyme (983 aa).

The tract at residues 1–468 (MTVENAKALF…KQYAALFAQA (468 aa)) is adenylyl removase. Positions 473–983 (AASGNLVFTG…FDKLVGHGAD (511 aa)) are adenylyl transferase.

It belongs to the GlnE family. It depends on Mg(2+) as a cofactor.

The enzyme catalyses [glutamine synthetase]-O(4)-(5'-adenylyl)-L-tyrosine + phosphate = [glutamine synthetase]-L-tyrosine + ADP. It carries out the reaction [glutamine synthetase]-L-tyrosine + ATP = [glutamine synthetase]-O(4)-(5'-adenylyl)-L-tyrosine + diphosphate. Involved in the regulation of glutamine synthetase GlnA, a key enzyme in the process to assimilate ammonia. When cellular nitrogen levels are high, the C-terminal adenylyl transferase (AT) inactivates GlnA by covalent transfer of an adenylyl group from ATP to specific tyrosine residue of GlnA, thus reducing its activity. Conversely, when nitrogen levels are low, the N-terminal adenylyl removase (AR) activates GlnA by removing the adenylyl group by phosphorolysis, increasing its activity. The regulatory region of GlnE binds the signal transduction protein PII (GlnB) which indicates the nitrogen status of the cell. This is Bifunctional glutamine synthetase adenylyltransferase/adenylyl-removing enzyme from Brucella suis biovar 1 (strain 1330).